We begin with the raw amino-acid sequence, 1218 residues long: Sodium bicarbonate cotransporter 3 (1218 aa).

Disordered regions lie at residues 1 to 31 (MEAD…KTSS) and 53 to 99 (HVPF…SQRV). Residues 1–612 (MEADGAGEQM…DFKDALSLQC (612 aa)) lie on the Extracellular side of the membrane. Phosphoserine is present on residues Ser57, Ser60, Ser89, and Ser155. The segment covering 60–77 (SRRRHRHRGHKHHHRRRK) has biased composition (basic residues). The span at 78-90 (DKDSDKEDGRESP) shows a compositional bias: basic and acidic residues. N-linked (GlcNAc...) asparagine glycosylation occurs at Asn176. Residues Ser238, Ser247, and Arg263 each carry the phosphoserine modification. The N-linked (GlcNAc...) asparagine glycan is linked to Asn274. Disordered stretches follow at residues 294–350 (SRAG…DIPR), 364–412 (KGQE…ENST), and 536–577 (SIRI…HAGP). Residues 308-318 (VPTPQNSPPSS) are compositionally biased toward pro residues. A compositionally biased stretch (low complexity) spans 319–337 (PSLSRLTSRSSQQTQPQAP). Positions 383–396 (SPQSAPGNLDSSKS) are enriched in polar residues. 3 positions are modified to phosphoserine: Ser386, Ser404, and Ser407. The N-linked (GlcNAc...) asparagine glycan is linked to Asn410. A phosphoserine mark is found at Ser411 and Ser560. Residues 567-576 (PPKEADHHAG) are compositionally biased toward basic and acidic residues. A helical membrane pass occupies residues 613–633 (LASILFLYCACMSPVITFGGL). At 634 to 641 (LGEATEGR) the chain is on the cytoplasmic side. A helical membrane pass occupies residues 642–662 (ISAIESLFGASLTGIAYSLFA). Residues 663 to 699 (GQPLTILGSTGPVLVFEKILFKFCRDYHLSYLSLRTS) lie on the Extracellular side of the membrane. A helical membrane pass occupies residues 700–720 (IGLWTSFLCIVLVATDASSLV). Residues 721-729 (CYITRFTEE) are Cytoplasmic-facing. A helical transmembrane segment spans residues 730-750 (AFAALICIIFIYEALEKLFHL). Residues 751–821 (GEIYAFNMHN…MFVGSACGPH (71 aa)) are Extracellular-facing. The cysteines at positions 770 and 772 are disulfide-linked. N-linked (GlcNAc...) asparagine glycosylation is found at Asn780, Asn790, and Asn800. Cys806 and Cys818 are joined by a disulfide. A helical membrane pass occupies residues 822–842 (GPYVPDVLFWCVVLFFTTFFL). The Cytoplasmic portion of the chain corresponds to 843–865 (SSFLKQFKTKRYFPTKVRSTISD). Residues 866-886 (FAVFLTIVIMVAIDYLVGIPS) traverse the membrane as a helical segment. Topologically, residues 887–912 (PKLHVPEKFEPTDPSRGWIISPLGDN) are extracellular. Residues 913 to 933 (PWWTLLIAAVPALLCTILIFM) traverse the membrane as a helical segment. The Cytoplasmic portion of the chain corresponds to 934–958 (DQQITAVIINRKEHKLKKGAGYHLD). The helical transmembrane segment at 959-979 (LLMVAVMLGVCSIMGLPWFVA) threads the bilayer. The Extracellular segment spans residues 980-1015 (ATVLSISHVNSLKVESECSAPGEQPKFLGIREQRVT). The interval 1012–1135 (QRVTGLMIFI…MDLCFTKREL (124 aa)) is essential for cell membrane localization and transport activity. The chain crosses the membrane as a helical span at residues 1016–1036 (GLMIFILMGLSVFMTSVLKFI). Residues 1037-1038 (PM) lie on the Cytoplasmic side of the membrane. A helical membrane pass occupies residues 1039–1059 (PVLYGVFLYMGVSSLKGIQFF). The Extracellular portion of the chain corresponds to 1060 to 1096 (DRIKLFGMPAKHQPDLIYLRYVPLWKVHVFTVVQLTC). Met1067 and Leu1078 each carry phosphoserine. The chain crosses the membrane as a helical span at residues 1097–1117 (LVLLWVIKASAAAVVFPMMVL). Residues 1118–1140 (ALVFVRKLMDLCFTKRELSWLDD) are essential for interaction with RACK1. At 1118–1218 (ALVFVRKLMD…KKYMDAETSL (101 aa)) the chain is on the cytoplasmic side. Residues 1138–1140 (LDD) form a CA2-binding region. Basic and acidic residues predominate over residues 1148-1165 (KKEDDKKKKEKEEAERML). The tract at residues 1148–1172 (KKEDDKKKKEKEEAERMLQGDGDTV) is disordered. Thr1171 carries the post-translational modification Phosphothreonine. Phosphoserine is present on residues Ser1180, Thr1188, Ile1201, and Ser1217. Positions 1215–1218 (ETSL) match the PDZ-binding motif.

This sequence belongs to the anion exchanger (TC 2.A.31) family. In terms of assembly, interacts with USH1C. Forms a complex with ATP6V1B1 and NHERF1/EBP50. Interacts in a pH dependent-manner with CA2/carbonic anhydrase 2. Interacts with CFTR probably through NHERF1/EBP50. Interacts with RACK1. Undergoes lysosome-mediated degradation. Post-translationally, N-glycosylated. Expressed in aorta, ventricles, atrium, mesenteric artery, kidney, spleen, duodenum, jejunum, ileum, colon, lung, trachea, gastric fundus and pylorus, cerebrum, cerebellum, pancreas, liver, parotid gland, and epididymis. Expressed in the inner ear by cochlear outer and inner hair cells (at protein level). Highly expressed in testis and spleen. As to expression, specifically expressed in kidney. In terms of tissue distribution, specifically expressed in hippocampal neurons.

Its subcellular location is the basolateral cell membrane. It localises to the apical cell membrane. The protein resides in the cell projection. It is found in the stereocilium. The protein localises to the cell membrane. The catalysed reaction is hydrogencarbonate(in) + Na(+)(in) = hydrogencarbonate(out) + Na(+)(out). Insensitive to stilbene derivatives. In terms of biological role, electroneutral sodium- and bicarbonate-dependent cotransporter with a Na(+):HCO3(-) 1:1 stoichiometry. Mediates the sodium-dependent bicarbonate transport important for pH recovery after acid load as well as for regulation of steady-state pH in the duodenum and vascular smooth muscle cells. Plays a key role in macrophage acidification, mediating bicarbonate import into the cytoplasm which is crucial for net acid extrusion and maintenance of cytoplasmic pH during phagocytosis. Provides cellular bicarbonate for de novo purine and pyrimidine synthesis and is a key mediator of de novo nucleotide synthesis downstream of mTORC1 signaling in proliferating cells. This chain is Sodium bicarbonate cotransporter 3 (Slc4a7), found in Rattus norvegicus (Rat).